Here is an 88-residue protein sequence, read N- to C-terminus: AVDAYDDDDNLKNEEGDYYNESDDGYSGDEEEEEKQEEDEQDDDDLQFDDGVPEDPISTLKCFSFNSVGTGSPCIFGVPVPAIRQVHS.

Positions 1–54 are disordered; sequence AVDAYDDDDNLKNEEGDYYNESDDGYSGDEEEEEKQEEDEQDDDDLQFDDGVPE. Over residues 16–53 the composition is skewed to acidic residues; that stretch reads GDYYNESDDGYSGDEEEEEKQEEDEQDDDDLQFDDGVP.

As to expression, predominantly in developing fruit.

This is an uncharacterized protein from Fragaria ananassa (Strawberry).